The following is a 447-amino-acid chain: MTRKLFGTDGVRGTANTHPMTAEMALRLGAAAGRYFRPVGAGSPRVVIGKDTRLSGYMLENALTAGLTSTGMNVLLLGPVPTPAVGFLTRSMRAALGVMISASHNPHEDNGIKFFGPDGFKLSDEAEAEIEAILAGEIQPAQPGNIGRAKRIEDGRGRYQEYCKTTFPSGLRLDGLKVVIDCANGAAYRAAPEVLWELGAEVIPVGVEPNGKNINLRCGSTHPEAAAEAVRAHGADVGICLDGDADRVIILDETGKEADGDQIMALFAARWADEGRLRDGTLVATVMSNLGLERFLGARGLRLERTPVGDRYVVEAMRRGGWNLGGEQSGHIVMTDFATTGDGLLAGLQFLAAMAQTGRRASDLARSFETVPQLLQNVRYAAGQEPLKAPGVQAVIRDAEVRLNGAGRLLIRKSGTEPLIRVMAECEDEALLRDVVEEIVAAVRDAA.

The active-site Phosphoserine intermediate is the S103. S103, D242, D244, and D246 together coordinate Mg(2+). At S103 the chain carries Phosphoserine.

This sequence belongs to the phosphohexose mutase family. It depends on Mg(2+) as a cofactor. Post-translationally, activated by phosphorylation.

The enzyme catalyses alpha-D-glucosamine 1-phosphate = D-glucosamine 6-phosphate. In terms of biological role, catalyzes the conversion of glucosamine-6-phosphate to glucosamine-1-phosphate. The sequence is that of Phosphoglucosamine mutase from Cereibacter sphaeroides (strain ATCC 17029 / ATH 2.4.9) (Rhodobacter sphaeroides).